We begin with the raw amino-acid sequence, 178 residues long: MDKTDQTAIDGSALELNRTEKTVEAVLRVASMALSITGLVIMIKNSISNDFGSLSYSNLGAFMYLVGANGVCAAYSLLSALAILALPCPISKVQVRTLFLLDQVVTYVVLAAGAVSAETVYLAYYGNIPITWSSACDSYGIFCHKALISVVFTFVVSLLYMLLSLISSYRLFSRFEAP.

Residues 1–22 (MDKTDQTAIDGSALELNRTEKT) are Cytoplasmic-facing. Residues 23–43 (VEAVLRVASMALSITGLVIMI) traverse the membrane as a helical segment. The Extracellular segment spans residues 44 to 69 (KNSISNDFGSLSYSNLGAFMYLVGAN). A helical membrane pass occupies residues 70–90 (GVCAAYSLLSALAILALPCPI). The Cytoplasmic segment spans residues 91–96 (SKVQVR). The chain crosses the membrane as a helical span at residues 97 to 117 (TLFLLDQVVTYVVLAAGAVSA). At 118–145 (ETVYLAYYGNIPITWSSACDSYGIFCHK) the chain is on the extracellular side. The chain crosses the membrane as a helical span at residues 146-166 (ALISVVFTFVVSLLYMLLSLI). Residues 167 to 178 (SSYRLFSRFEAP) lie on the Cytoplasmic side of the membrane.

The protein belongs to the Casparian strip membrane proteins (CASP) family. Homodimer and heterodimers.

It localises to the cell membrane. In Arabidopsis lyrata subsp. lyrata (Lyre-leaved rock-cress), this protein is CASP-like protein 2A2.